A 273-amino-acid polypeptide reads, in one-letter code: 3-keto-5-aminohexanoate cleavage enzyme (273 aa).

Glu-14 is a (5S)-5-amino-3-oxohexanoate binding site. Residues His-46 and His-48 each contribute to the Zn(2+) site. Residues Ser-82, Gly-85, and Ser-106 each coordinate (5S)-5-amino-3-oxohexanoate. A Zn(2+)-binding site is contributed by Glu-227.

The protein belongs to the BKACE family. Kce subfamily. In terms of assembly, homotetramer. Requires Zn(2+) as cofactor.

The enzyme catalyses (5S)-5-amino-3-oxohexanoate + acetyl-CoA = (3S)-3-aminobutanoyl-CoA + acetoacetate. The protein operates within amino-acid degradation; L-lysine degradation via acetate pathway. Functionally, involved in the anaerobic fermentation of lysine. Catalyzes the reversible reaction between 3-keto-5-aminohexanoate (KAH) and acetyl-CoA to form 3-aminobutyryl-CoA and acetoacetate. The reaction involves the deprotonation of KAH, the nucleophilic addition onto acetyl-CoA and the intramolecular transfer of the CoA moiety. The protein is 3-keto-5-aminohexanoate cleavage enzyme of Acetoanaerobium sticklandii (strain ATCC 12662 / DSM 519 / JCM 1433 / CCUG 9281 / NCIMB 10654 / HF) (Clostridium sticklandii).